The following is a 204-amino-acid chain: Peptide deformylase (204 aa).

Fe cation-binding residues include Cys-131 and His-174. The active site involves Glu-175. His-178 serves as a coordination point for Fe cation.

It belongs to the polypeptide deformylase family. Requires Fe(2+) as cofactor.

The catalysed reaction is N-terminal N-formyl-L-methionyl-[peptide] + H2O = N-terminal L-methionyl-[peptide] + formate. Its function is as follows. Removes the formyl group from the N-terminal Met of newly synthesized proteins. Requires at least a dipeptide for an efficient rate of reaction. N-terminal L-methionine is a prerequisite for activity but the enzyme has broad specificity at other positions. In Streptococcus pyogenes serotype M49 (strain NZ131), this protein is Peptide deformylase.